A 455-amino-acid chain; its full sequence is UDP-N-acetylmuramoylalanine--D-glutamate ligase (455 aa).

117 to 123 (GTNGKTT) provides a ligand contact to ATP.

This sequence belongs to the MurCDEF family.

The protein localises to the cytoplasm. The catalysed reaction is UDP-N-acetyl-alpha-D-muramoyl-L-alanine + D-glutamate + ATP = UDP-N-acetyl-alpha-D-muramoyl-L-alanyl-D-glutamate + ADP + phosphate + H(+). The protein operates within cell wall biogenesis; peptidoglycan biosynthesis. Functionally, cell wall formation. Catalyzes the addition of glutamate to the nucleotide precursor UDP-N-acetylmuramoyl-L-alanine (UMA). In Alkaliphilus metalliredigens (strain QYMF), this protein is UDP-N-acetylmuramoylalanine--D-glutamate ligase.